A 406-amino-acid polypeptide reads, in one-letter code: MSIYKIPLPLNILEAARERITWTLNTLPRVCVSFSGGKDSGLMLHLTAELARQMGKKICVLFIDWEAQFSCTINYVQSLRELYTDVIEEFYWVALPLTTQNSLSQYQPEWQCWEPDVEWVRQPPQDAITDPDFFCFYQPGMTFEQFVREFAEWFSQKRPAAMMIGIRADESYNRFVAIASLNKQRFADDKPWTTAAPGGHSWYIYPIYDWKVADIWTWYANHQSLCNPLYNLMYQAGVPLRHMRICEPFGPEQRQGLWLYHVIEPDRWAAMCARVSGVKSGGIYAGHDNHFYGHRKILKPEHLDWQEYALLLLNSMPEKTAEHYRNKIAIYLHWYQKKGIEVPQTQQGDIGAKDIPSWRRICKVLLNNDYWCRALSFSPTKSKNYQRYNERIKGKRQEWGILCNND.

This is an uncharacterized protein from Escherichia coli (strain K12).